Consider the following 242-residue polypeptide: C-reactive protein 1.4 (242 aa).

Residues 1-24 (MKTFHGPTFGTAVFLYLLLFLTSA) form the signal peptide. In terms of domain architecture, Pentraxin (PTX) spans 30–241 (ITSKVKFPPS…GVVLSPNEIC (212 aa)). T60 and Y63 together coordinate phosphocholine. 2 disulfide bridges follow: C62–C125 and C112–C144. Ca(2+) is bound by residues D85 and N86. N-linked (GlcNAc...) asparagine glycosylation is present at N147. 4 residues coordinate Ca(2+): E168, Q169, D170, and Q180. C207 and C241 are oxidised to a cystine.

It belongs to the pentraxin family. Homopentamer. Pentraxin (or pentaxin) have a discoid arrangement of 5 non-covalently bound subunits. The cofactor is Ca(2+).

It is found in the secreted. Its function is as follows. Might serve the role of immunoglobulins. In Limulus polyphemus (Atlantic horseshoe crab), this protein is C-reactive protein 1.4.